Here is an 804-residue protein sequence, read N- to C-terminus: Leucine--tRNA ligase (804 aa).

Positions 39 to 50 (PYPSGAGLHVGH) match the 'HIGH' region motif. Positions 580–584 (KMSKS) match the 'KMSKS' region motif. Lys-583 is a binding site for ATP.

The protein belongs to the class-I aminoacyl-tRNA synthetase family.

It localises to the cytoplasm. The catalysed reaction is tRNA(Leu) + L-leucine + ATP = L-leucyl-tRNA(Leu) + AMP + diphosphate. The chain is Leucine--tRNA ligase from Mycoplasma capricolum subsp. capricolum (strain California kid / ATCC 27343 / NCTC 10154).